Consider the following 1342-residue polypeptide: DNA-directed RNA polymerase subunit beta (1342 aa).

Lys-1022 and Lys-1200 each carry N6-acetyllysine.

Belongs to the RNA polymerase beta chain family. The RNAP catalytic core consists of 2 alpha, 1 beta, 1 beta' and 1 omega subunit. When a sigma factor is associated with the core the holoenzyme is formed, which can initiate transcription.

The enzyme catalyses RNA(n) + a ribonucleoside 5'-triphosphate = RNA(n+1) + diphosphate. Its function is as follows. DNA-dependent RNA polymerase catalyzes the transcription of DNA into RNA using the four ribonucleoside triphosphates as substrates. The chain is DNA-directed RNA polymerase subunit beta from Escherichia fergusonii (strain ATCC 35469 / DSM 13698 / CCUG 18766 / IAM 14443 / JCM 21226 / LMG 7866 / NBRC 102419 / NCTC 12128 / CDC 0568-73).